Here is an 85-residue protein sequence, read N- to C-terminus: Neutrophil elastase 2A (85 aa).

A Peptidase S1 domain is found at 1–85 (IVGGRAAEPH…VAQGVFSFVR (85 aa)). Residue serine 67 is the Charge relay system of the active site.

Belongs to the peptidase S1 family. Elastase subfamily.

Its function is as follows. May be involved in the degradation of connective tissue in chronic lung disease. The chain is Neutrophil elastase 2A from Equus caballus (Horse).